We begin with the raw amino-acid sequence, 127 residues long: Major sperm protein 77/79 (127 aa).

N-acetylalanine is present on Ala-2. The MSP domain occupies 9 to 126 (DIQTQPGTKI…RRKNLPIEYN (118 aa)).

In terms of tissue distribution, sperm.

The protein resides in the cell projection. It is found in the pseudopodium. Its subcellular location is the cytoplasm. It localises to the cytoskeleton. Central component in molecular interactions underlying sperm crawling. Forms an extensive filament system that extends from sperm villipoda, along the leading edge of the pseudopod. This Caenorhabditis elegans protein is Major sperm protein 77/79 (msp-77).